The chain runs to 126 residues: Fatty acid-binding protein 1, liver (126 aa).

This sequence belongs to the calycin superfamily. Fatty-acid binding protein (FABP) family.

Its subcellular location is the cytoplasm. Binds free fatty acids and their coenzyme A derivatives, bilirubin, and some other small molecules in the cytoplasm. May be involved in intracellular lipid transport. The specificity of axolotl L-FABP differs from that of LB-FABP. This chain is Fatty acid-binding protein 1, liver, found in Ambystoma mexicanum (Axolotl).